A 299-amino-acid chain; its full sequence is Nicotinate-nucleotide pyrophosphorylase [carboxylating] (299 aa).

The interval His8–Pro12 is important for hexamer formation. Residues Arg102, Arg138–Lys139, His160–Arg161, Lys171, Glu201, Asp222, Ser248–Gly250, and Gly270 contribute to the quinolinate site. At Thr291 the chain carries Phosphothreonine.

Belongs to the NadC/ModD family. As to quaternary structure, hexamer formed by 3 homodimers.

The catalysed reaction is nicotinate beta-D-ribonucleotide + CO2 + diphosphate = quinolinate + 5-phospho-alpha-D-ribose 1-diphosphate + 2 H(+). It functions in the pathway cofactor biosynthesis; NAD(+) biosynthesis; nicotinate D-ribonucleotide from quinolinate: step 1/1. In terms of biological role, involved in the catabolism of quinolinic acid (QA). This Bos taurus (Bovine) protein is Nicotinate-nucleotide pyrophosphorylase [carboxylating] (QPRT).